Reading from the N-terminus, the 338-residue chain is Ketol-acid reductoisomerase (NADP(+)) (338 aa).

Residues Met1 to Thr181 form the KARI N-terminal Rossmann domain. NADP(+) contacts are provided by residues Tyr24–Gln27, Arg47, and Ser52. Residue His107 is part of the active site. Position 133 (Gly133) interacts with NADP(+). A KARI C-terminal knotted domain is found at Asn182–Ile327. Residues Asp190, Glu194, Glu226, and Glu230 each contribute to the Mg(2+) site. Ser251 is a binding site for substrate.

Belongs to the ketol-acid reductoisomerase family. Mg(2+) serves as cofactor.

The enzyme catalyses (2R)-2,3-dihydroxy-3-methylbutanoate + NADP(+) = (2S)-2-acetolactate + NADPH + H(+). It catalyses the reaction (2R,3R)-2,3-dihydroxy-3-methylpentanoate + NADP(+) = (S)-2-ethyl-2-hydroxy-3-oxobutanoate + NADPH + H(+). It functions in the pathway amino-acid biosynthesis; L-isoleucine biosynthesis; L-isoleucine from 2-oxobutanoate: step 2/4. Its pathway is amino-acid biosynthesis; L-valine biosynthesis; L-valine from pyruvate: step 2/4. Functionally, involved in the biosynthesis of branched-chain amino acids (BCAA). Catalyzes an alkyl-migration followed by a ketol-acid reduction of (S)-2-acetolactate (S2AL) to yield (R)-2,3-dihydroxy-isovalerate. In the isomerase reaction, S2AL is rearranged via a Mg-dependent methyl migration to produce 3-hydroxy-3-methyl-2-ketobutyrate (HMKB). In the reductase reaction, this 2-ketoacid undergoes a metal-dependent reduction by NADPH to yield (R)-2,3-dihydroxy-isovalerate. The chain is Ketol-acid reductoisomerase (NADP(+)) from Cupriavidus necator (strain ATCC 17699 / DSM 428 / KCTC 22496 / NCIMB 10442 / H16 / Stanier 337) (Ralstonia eutropha).